The following is a 464-amino-acid chain: L-cysteine desulfhydrase-like protein lolT2 (464 aa).

K227 bears the N6-(pyridoxal phosphate)lysine mark.

Belongs to the class-V pyridoxal-phosphate-dependent aminotransferase family. It depends on pyridoxal 5'-phosphate as a cofactor.

The protein operates within alkaloid biosynthesis. Functionally, L-cysteine desulfhydrase-like protein; part of the gene cluster that mediates the biosynthesis of loline alkaloids, potent insecticidal agents composed of a pyrrolizidine ring system and an uncommon ether bridge linking carbons 2 and 7. Lolines are structurally differentiated by the various modifications of the L-amino group and include norloline, loline, N-methylloline, N-acetylloline, N-acetylnorloline, and N-formylloline. The first committed step is the condensation of O-acetyl-L-homoserine (derived from L-aspartic acid) and L-proline, probably catalyzed by the gamma-type pyridoxal 5'-phosphate(PLP)-dependent enzyme lolC, to give the diamino diacid, NACPP. Ensuing cyclization, decarboxylation, and acetylation steps yield 1-exo-acetamidopyrrolizidine (AcAP). LolO is required for installation of the ether bridge upon the pathway intermediate, 1-exo-acetamidopyrrolizidine (AcAP). In sequential 2-oxoglutarate- and O(2)-consuming steps, lolO removes hydrogens from C2 and C7 of AcAP to form both carbon-oxygen bonds in N-acetylnorloline (NANL), the precursor to all other lolines. The enzymes lolD, lolE, lolF and lolT have also been proposed to be involved in the ether-bridge installation. Further processing of the exocyclic moiety of NANL by fungal N-acetamidase (LolN), methyltransferase (LolM), and cytochrome P450 (LolP) enzymes, with occasional involvement of a plant acetyltransferase, generates the other known lolines. LolN transforms NANL to norlonine which is monomethylated and dimethylated to respectively lonine and N-methyllonine (NML) by lolM. LolP catalyzes hydroxylation of the methyl group in N-methylloline (NML) and further oxygenation to N-formylloline (NFL). A plant acetyltransferase is responsible for the acetylation of loline to form N-acetylloline (NAL). LolA might interact with aspartate kinase to prevent feedback inhibition of its activity by these end products and thereby promote production of L-homoserine from L-aspartate. The polypeptide is L-cysteine desulfhydrase-like protein lolT2 (Epichloe uncinata (Endophyte fungus)).